The following is a 211-amino-acid chain: Small ribosomal subunit protein uS3 (211 aa).

The region spanning 38-106 (LRNFLKKRLY…EVYLNIQEVR (69 aa)) is the KH type-2 domain.

It belongs to the universal ribosomal protein uS3 family. As to quaternary structure, part of the 30S ribosomal subunit. Forms a tight complex with proteins S10 and S14.

Its function is as follows. Binds the lower part of the 30S subunit head. Binds mRNA in the 70S ribosome, positioning it for translation. The polypeptide is Small ribosomal subunit protein uS3 (Citrifermentans bemidjiense (strain ATCC BAA-1014 / DSM 16622 / JCM 12645 / Bem) (Geobacter bemidjiensis)).